We begin with the raw amino-acid sequence, 583 residues long: Proline--tRNA ligase (583 aa).

This sequence belongs to the class-II aminoacyl-tRNA synthetase family. ProS type 1 subfamily. As to quaternary structure, homodimer.

Its subcellular location is the cytoplasm. The catalysed reaction is tRNA(Pro) + L-proline + ATP = L-prolyl-tRNA(Pro) + AMP + diphosphate. Functionally, catalyzes the attachment of proline to tRNA(Pro) in a two-step reaction: proline is first activated by ATP to form Pro-AMP and then transferred to the acceptor end of tRNA(Pro). As ProRS can inadvertently accommodate and process non-cognate amino acids such as alanine and cysteine, to avoid such errors it has two additional distinct editing activities against alanine. One activity is designated as 'pretransfer' editing and involves the tRNA(Pro)-independent hydrolysis of activated Ala-AMP. The other activity is designated 'posttransfer' editing and involves deacylation of mischarged Ala-tRNA(Pro). The misacylated Cys-tRNA(Pro) is not edited by ProRS. The sequence is that of Proline--tRNA ligase from Aromatoleum aromaticum (strain DSM 19018 / LMG 30748 / EbN1) (Azoarcus sp. (strain EbN1)).